A 176-amino-acid chain; its full sequence is Large ribosomal subunit protein uL10 (176 aa).

Belongs to the universal ribosomal protein uL10 family. Part of the ribosomal stalk of the 50S ribosomal subunit. The N-terminus interacts with L11 and the large rRNA to form the base of the stalk. The C-terminus forms an elongated spine to which L12 dimers bind in a sequential fashion forming a multimeric L10(L12)X complex.

Forms part of the ribosomal stalk, playing a central role in the interaction of the ribosome with GTP-bound translation factors. This Natranaerobius thermophilus (strain ATCC BAA-1301 / DSM 18059 / JW/NM-WN-LF) protein is Large ribosomal subunit protein uL10.